A 186-amino-acid polypeptide reads, in one-letter code: NADH-quinone oxidoreductase subunit B 2 (186 aa).

The interval 1-27 (MPSFTQPHSAPRNFQFPGQQRQGDPTM) is disordered. [4Fe-4S] cluster is bound by residues cysteine 65, cysteine 66, cysteine 130, and cysteine 160.

The protein belongs to the complex I 20 kDa subunit family. NDH-1 is composed of 14 different subunits. Subunits NuoB, C, D, E, F, and G constitute the peripheral sector of the complex. [4Fe-4S] cluster serves as cofactor.

The protein resides in the cell inner membrane. It catalyses the reaction a quinone + NADH + 5 H(+)(in) = a quinol + NAD(+) + 4 H(+)(out). NDH-1 shuttles electrons from NADH, via FMN and iron-sulfur (Fe-S) centers, to quinones in the respiratory chain. The immediate electron acceptor for the enzyme in this species is believed to be ubiquinone. Couples the redox reaction to proton translocation (for every two electrons transferred, four hydrogen ions are translocated across the cytoplasmic membrane), and thus conserves the redox energy in a proton gradient. This is NADH-quinone oxidoreductase subunit B 2 from Rhizobium etli (strain ATCC 51251 / DSM 11541 / JCM 21823 / NBRC 15573 / CFN 42).